The primary structure comprises 492 residues: Putative sucrose transport protein SUC6 (492 aa).

Residues 1–26 are disordered; it reads MSDLQANKDAAAVNRQSSSSSADLNG. Residues 1-33 lie on the Cytoplasmic side of the membrane; it reads MSDLQANKDAAAVNRQSSSSSADLNGPSPMRKM. Residues 14 to 23 show a composition bias toward polar residues; that stretch reads NRQSSSSSAD. Ser17 bears the Phosphoserine mark. A helical membrane pass occupies residues 34–54; the sequence is ISVASIAAGIQFGWALQLSLL. The Extracellular portion of the chain corresponds to 55–68; the sequence is TPYVQLLGVPHKWS. The chain crosses the membrane as a helical span at residues 69–89; it reads SFIWLCGPVSGLLVQPSVGYF. Residues 90–101 lie on the Cytoplasmic side of the membrane; sequence SDRCKSRFGRRR. Residues 102–122 form a helical membrane-spanning segment; it reads PFIAMGALLVAVAVVLIGYAA. Over 123 to 139 the chain is Extracellular; sequence DFGHSMGDKVDEPVKMR. Residues 140-160 form a helical membrane-spanning segment; the sequence is AVVIFALGFWILDVANNTLQG. Residues 161-181 are Cytoplasmic-facing; sequence PCRAFLGDLAAGDAKKTRTAN. The helical transmembrane segment at 182 to 202 threads the bilayer; that stretch reads AFFSFFMAVGNVLGYAAGSYT. Residues 203–224 are Extracellular-facing; it reads NLYKIFPFTMTKACDIYCANLK. Residues 225-245 form a helical membrane-spanning segment; it reads SCFFLSITLLLVVTIIALWYV. Residues 246–277 are Cytoplasmic-facing; it reads EDKQWSPKADSDNEKTPFFGEIFGAFKVMKRP. Residues 278–298 traverse the membrane as a helical segment; sequence MWMLLIVTALNWIAWFPFLLY. The Extracellular segment spans residues 299–324; the sequence is DTDWMGREVYGGDSKGDDKMKKLYNQ. Residues 325–345 form a helical membrane-spanning segment; sequence GIHVGGLGLMLNSIVLGFMSL. Over 346–359 the chain is Cytoplasmic; that stretch reads GIEGISRKMGGAKR. The chain crosses the membrane as a helical span at residues 360-380; the sequence is LWGAVNIILAVCLAMTVLVTK. Over 381 to 403 the chain is Extracellular; that stretch reads KAEEHRRIAGPMALPTDGIRAGA. Residues 404 to 424 traverse the membrane as a helical segment; the sequence is LTLFALLGIPLAITFSIPFAL. At 425–446 the chain is on the cytoplasmic side; that stretch reads ASIISSSSGAGQGLSLGVLNMT. The helical transmembrane segment at 447–467 threads the bilayer; it reads IVIPQMVVSFGVGPIDALFGG. Topologically, residues 468–469 are extracellular; sequence GN. Residues 470–490 form a helical membrane-spanning segment; it reads LPGFVVGAIAAAISSVVAFSV. Over 491 to 492 the chain is Cytoplasmic; that stretch reads LP.

Belongs to the glycoside-pentoside-hexuronide (GPH) cation symporter transporter (TC 2.A.2.4) family.

Its subcellular location is the cell membrane. It functions in the pathway glycan biosynthesis; sucrose metabolism. In terms of biological role, may be responsible for the transport of glucosides into the cell, with the concomitant uptake of protons (symport system). Does not seem to transport sucrose. This chain is Putative sucrose transport protein SUC6, found in Arabidopsis thaliana (Mouse-ear cress).